Reading from the N-terminus, the 207-residue chain is 3-isopropylmalate dehydratase small subunit (207 aa).

Belongs to the LeuD family. LeuD type 1 subfamily. In terms of assembly, heterodimer of LeuC and LeuD.

It catalyses the reaction (2R,3S)-3-isopropylmalate = (2S)-2-isopropylmalate. Its pathway is amino-acid biosynthesis; L-leucine biosynthesis; L-leucine from 3-methyl-2-oxobutanoate: step 2/4. Its function is as follows. Catalyzes the isomerization between 2-isopropylmalate and 3-isopropylmalate, via the formation of 2-isopropylmaleate. This Acidithiobacillus ferrooxidans (strain ATCC 23270 / DSM 14882 / CIP 104768 / NCIMB 8455) (Ferrobacillus ferrooxidans (strain ATCC 23270)) protein is 3-isopropylmalate dehydratase small subunit.